Consider the following 615-residue polypeptide: ATP-dependent zinc metalloprotease FtsH (615 aa).

Residues 1-8 (MAMNKDKP) are Cytoplasmic-facing. Residues 9-29 (WTLYLLAVGLAVLAAVQFGLF) form a helical membrane-spanning segment. The Periplasmic segment spans residues 30–104 (SQPAVQAIPY…FSGVVEDNTV (75 aa)). Residues 105–125 (ATVMGALMPLLMLLALWYFLF) form a helical membrane-spanning segment. Over 126 to 615 (HGLGQKQGLG…ATYVLVDATK (490 aa)) the chain is Cytoplasmic. 198–205 (GPPGTGKT) is an ATP binding site. His420 is a Zn(2+) binding site. Glu421 is an active-site residue. Zn(2+) is bound by residues His424 and Asp497.

This sequence in the central section; belongs to the AAA ATPase family. The protein in the C-terminal section; belongs to the peptidase M41 family. As to quaternary structure, homohexamer. Requires Zn(2+) as cofactor.

Its subcellular location is the cell inner membrane. In terms of biological role, acts as a processive, ATP-dependent zinc metallopeptidase for both cytoplasmic and membrane proteins. Plays a role in the quality control of integral membrane proteins. The polypeptide is ATP-dependent zinc metalloprotease FtsH (Pseudomonas putida (strain ATCC 700007 / DSM 6899 / JCM 31910 / BCRC 17059 / LMG 24140 / F1)).